A 359-amino-acid chain; its full sequence is Phospho-N-acetylmuramoyl-pentapeptide-transferase (359 aa).

The next 10 membrane-spanning stretches (helical) occupy residues 3–23 (QILV…PALI), 55–75 (VAIV…GLAF), 80–100 (VSAS…VGFL), 117–137 (TAKT…VLQF), 156–176 (IATV…IVSA), 187–207 (LDGL…LITF), 231–251 (LTLI…WNAA), 255–275 (IFMG…LSVT), 280–300 (ILAV…VLQI), and 334–354 (FWLL…GEWL).

This sequence belongs to the glycosyltransferase 4 family. MraY subfamily. The cofactor is Mg(2+).

It is found in the cell membrane. It catalyses the reaction UDP-N-acetyl-alpha-D-muramoyl-L-alanyl-gamma-D-glutamyl-meso-2,6-diaminopimeloyl-D-alanyl-D-alanine + di-trans,octa-cis-undecaprenyl phosphate = di-trans,octa-cis-undecaprenyl diphospho-N-acetyl-alpha-D-muramoyl-L-alanyl-D-glutamyl-meso-2,6-diaminopimeloyl-D-alanyl-D-alanine + UMP. It participates in cell wall biogenesis; peptidoglycan biosynthesis. Its function is as follows. Catalyzes the initial step of the lipid cycle reactions in the biosynthesis of the cell wall peptidoglycan: transfers peptidoglycan precursor phospho-MurNAc-pentapeptide from UDP-MurNAc-pentapeptide onto the lipid carrier undecaprenyl phosphate, yielding undecaprenyl-pyrophosphoryl-MurNAc-pentapeptide, known as lipid I. In Mycobacterium leprae (strain TN), this protein is Phospho-N-acetylmuramoyl-pentapeptide-transferase.